Reading from the N-terminus, the 330-residue chain is Peroxidase 70 (330 aa).

Positions 1 to 24 are cleaved as a signal peptide; that stretch reads MRSFTNLNPCYVLLPFFLVLATNA. 4 disulfide bridges follow: C43–C119, C76–C81, C125–C326, and C202–C234. The Proton acceptor role is filled by H74. Ca(2+)-binding residues include D75, V78, G80, D82, and S84. P165 is a substrate binding site. H195 serves as a coordination point for heme b. T196 provides a ligand contact to Ca(2+). The Ca(2+) site is built by D247, S250, and D255.

This sequence belongs to the peroxidase family. Classical plant (class III) peroxidase subfamily. It depends on heme b as a cofactor. Requires Ca(2+) as cofactor.

It localises to the secreted. It carries out the reaction 2 a phenolic donor + H2O2 = 2 a phenolic radical donor + 2 H2O. Its function is as follows. Removal of H(2)O(2), oxidation of toxic reductants, biosynthesis and degradation of lignin, suberization, auxin catabolism, response to environmental stresses such as wounding, pathogen attack and oxidative stress. These functions might be dependent on each isozyme/isoform in each plant tissue. The polypeptide is Peroxidase 70 (PER70) (Arabidopsis thaliana (Mouse-ear cress)).